Reading from the N-terminus, the 300-residue chain is Regulatory protein NocR (300 aa).

In terms of domain architecture, HTH lysR-type spans 1–59; that stretch reads MIQSRQLEAFRPVMLTGGMTSAANLVRITQPAISRLIRDLEEEIGISLFERTGNRLRPT. Residues 19–38 constitute a DNA-binding region (H-T-H motif); the sequence is MTSAANLVRITQPAISRLIR.

It belongs to the LysR transcriptional regulatory family.

Positive regulatory protein for the noc operon involved in nopaline catabolism and uptake. This chain is Regulatory protein NocR (nocR), found in Agrobacterium tumefaciens (strain T37).